Consider the following 280-residue polypeptide: MEVITNPGQMQTLMLSLKKQGKKIGFVPTMGYLHEGHLSLIRCSKKENDITVVSIFVNPIQFGANEDFGRYPRDFERDKSLCEKENVDYIFYPSYEEMYPDGFQTYVEVAELSKGLCGDFRPGHFKGVATVVAKLFNIVCPDNVYFGKKDFQQLKVIQRMVKDLNFPVNVVGCPVVREPDGLAMSSRNKYLSDEERESALNISKALFEAKRMFEDGITDPNLIKERVRQIISQAKHLKEIQYVEIVDSNTLKPVDKVKKSDVLAVAVYIGNTRLIDNIEF.

30–37 (MGYLHEGH) provides a ligand contact to ATP. Histidine 37 (proton donor) is an active-site residue. Glutamine 61 lines the (R)-pantoate pocket. A beta-alanine-binding site is contributed by glutamine 61. 147–150 (GKKD) lines the ATP pocket. Glutamine 153 contacts (R)-pantoate. ATP is bound by residues valine 176 and 184-187 (MSSR).

Belongs to the pantothenate synthetase family. Homodimer.

It localises to the cytoplasm. It catalyses the reaction (R)-pantoate + beta-alanine + ATP = (R)-pantothenate + AMP + diphosphate + H(+). Its pathway is cofactor biosynthesis; (R)-pantothenate biosynthesis; (R)-pantothenate from (R)-pantoate and beta-alanine: step 1/1. Its function is as follows. Catalyzes the condensation of pantoate with beta-alanine in an ATP-dependent reaction via a pantoyl-adenylate intermediate. The protein is Pantothenate synthetase of Sulfurihydrogenibium sp. (strain YO3AOP1).